The following is an 870-amino-acid chain: Leucine--tRNA ligase (870 aa).

The 'HIGH' region signature appears at 55–65 (PYPSGTLHMGH). Positions 626–630 (KMSKS) match the 'KMSKS' region motif. ATP is bound at residue Lys-629.

The protein belongs to the class-I aminoacyl-tRNA synthetase family.

The protein resides in the cytoplasm. The enzyme catalyses tRNA(Leu) + L-leucine + ATP = L-leucyl-tRNA(Leu) + AMP + diphosphate. This Prochlorococcus marinus (strain SARG / CCMP1375 / SS120) protein is Leucine--tRNA ligase.